Consider the following 470-residue polypeptide: Cysteine--tRNA ligase (470 aa).

Cys-46 serves as a coordination point for Zn(2+). The 'HIGH' region motif lies at 48 to 58 (PTVYDLAHIGN). Zn(2+)-binding residues include Cys-230, His-255, and Glu-259. Positions 288–292 (KMSKS) match the 'KMSKS' region motif. Lys-291 is an ATP binding site.

The protein belongs to the class-I aminoacyl-tRNA synthetase family. In terms of assembly, monomer. Zn(2+) serves as cofactor.

The protein resides in the cytoplasm. It catalyses the reaction tRNA(Cys) + L-cysteine + ATP = L-cysteinyl-tRNA(Cys) + AMP + diphosphate. This Granulibacter bethesdensis (strain ATCC BAA-1260 / CGDNIH1) protein is Cysteine--tRNA ligase.